Reading from the N-terminus, the 406-residue chain is Fructose-1,6-bisphosphatase, chloroplastic (406 aa).

The N-terminal 47 residues, 1 to 47 (MAAAATTSSHLLLLSRQQAAASLQCGLSFRRQPGRLAGGSSAPSVRC), are a transit peptide targeting the chloroplast. Mg(2+)-binding residues include E128, E157, D178, L180, and D181. 181–184 (DGSS) lines the substrate pocket. A disulfide bridge connects residues C222 and C227. N286, Y318, Y336, Y338, and K348 together coordinate substrate. E354 is a binding site for Mg(2+).

This sequence belongs to the FBPase class 1 family. In terms of assembly, homotetramer. It depends on Mg(2+) as a cofactor.

The protein localises to the plastid. It is found in the chloroplast stroma. The catalysed reaction is beta-D-fructose 1,6-bisphosphate + H2O = beta-D-fructose 6-phosphate + phosphate. It functions in the pathway carbohydrate biosynthesis; Calvin cycle. Inhibited by sodium chloride. Functionally, catalyzes the irreversible reaction from fructose-1,6-bisphosphate to fructose-6-phosphate and inorganic phosphate, to regenerate the primary CO(2) acceptor molecule, ribulose-1,5-bisphosphate. Involved in the regulation of photosynthetic performance and sucrose synthesis. This Oryza sativa subsp. indica (Rice) protein is Fructose-1,6-bisphosphatase, chloroplastic.